We begin with the raw amino-acid sequence, 285 residues long: 2-dehydro-3-deoxyphosphooctonate aldolase (285 aa).

It belongs to the KdsA family.

The protein localises to the cytoplasm. It carries out the reaction D-arabinose 5-phosphate + phosphoenolpyruvate + H2O = 3-deoxy-alpha-D-manno-2-octulosonate-8-phosphate + phosphate. The protein operates within carbohydrate biosynthesis; 3-deoxy-D-manno-octulosonate biosynthesis; 3-deoxy-D-manno-octulosonate from D-ribulose 5-phosphate: step 2/3. It participates in bacterial outer membrane biogenesis; lipopolysaccharide biosynthesis. The sequence is that of 2-dehydro-3-deoxyphosphooctonate aldolase from Acidovorax sp. (strain JS42).